We begin with the raw amino-acid sequence, 341 residues long: Phenylalanine--tRNA ligase alpha subunit (341 aa).

Residue Glu-254 coordinates Mg(2+).

Belongs to the class-II aminoacyl-tRNA synthetase family. Phe-tRNA synthetase alpha subunit type 1 subfamily. As to quaternary structure, tetramer of two alpha and two beta subunits. Requires Mg(2+) as cofactor.

Its subcellular location is the cytoplasm. It carries out the reaction tRNA(Phe) + L-phenylalanine + ATP = L-phenylalanyl-tRNA(Phe) + AMP + diphosphate + H(+). The sequence is that of Phenylalanine--tRNA ligase alpha subunit from Chlorobium phaeovibrioides (strain DSM 265 / 1930) (Prosthecochloris vibrioformis (strain DSM 265)).